The primary structure comprises 217 residues: Small ribosomal subunit protein uS3 (217 aa).

The KH type-2 domain maps to 38–106 (IRKFIDNELK…KVHINVIEIK (69 aa)).

The protein belongs to the universal ribosomal protein uS3 family. In terms of assembly, part of the 30S ribosomal subunit. Forms a tight complex with proteins S10 and S14.

Binds the lower part of the 30S subunit head. Binds mRNA in the 70S ribosome, positioning it for translation. This chain is Small ribosomal subunit protein uS3, found in Staphylococcus haemolyticus (strain JCSC1435).